The primary structure comprises 237 residues: Uridylate kinase (237 aa).

11–14 provides a ligand contact to ATP; sequence KLSG. An involved in allosteric activation by GTP region spans residues 18 to 23; it reads GGGGIG. Gly-52 lines the UMP pocket. 2 residues coordinate ATP: Gly-53 and Arg-57. UMP contacts are provided by residues Asp-72 and 133–140; that span reads SGMPYFST. The ATP site is built by Gln-161, Tyr-167, and Asp-170.

The protein belongs to the UMP kinase family. Homohexamer.

The protein resides in the cytoplasm. It catalyses the reaction UMP + ATP = UDP + ADP. It functions in the pathway pyrimidine metabolism; CTP biosynthesis via de novo pathway; UDP from UMP (UMPK route): step 1/1. Its activity is regulated as follows. Allosterically activated by GTP. Inhibited by UTP. Functionally, catalyzes the reversible phosphorylation of UMP to UDP. In Cutibacterium acnes (strain DSM 16379 / KPA171202) (Propionibacterium acnes), this protein is Uridylate kinase.